We begin with the raw amino-acid sequence, 179 residues long: Large ribosomal subunit protein uL5 (179 aa).

The protein belongs to the universal ribosomal protein uL5 family. Part of the 50S ribosomal subunit; part of the 5S rRNA/L5/L18/L25 subcomplex. Contacts the 5S rRNA and the P site tRNA. Forms a bridge to the 30S subunit in the 70S ribosome.

This is one of the proteins that bind and probably mediate the attachment of the 5S RNA into the large ribosomal subunit, where it forms part of the central protuberance. In the 70S ribosome it contacts protein S13 of the 30S subunit (bridge B1b), connecting the 2 subunits; this bridge is implicated in subunit movement. Contacts the P site tRNA; the 5S rRNA and some of its associated proteins might help stabilize positioning of ribosome-bound tRNAs. The polypeptide is Large ribosomal subunit protein uL5 (Pseudomonas aeruginosa (strain LESB58)).